The primary structure comprises 998 residues: Mis18-binding protein 1 (998 aa).

K7 participates in a covalent cross-link: Glycyl lysine isopeptide (Lys-Gly) (interchain with G-Cter in SUMO2). S9, S109, and S134 each carry phosphoserine. Residues Q122–K153 form a disordered region. Positions E142–K153 are enriched in basic and acidic residues. Phosphoserine occurs at positions 169 and 258. An SANTA domain is found at V336–E422. 2 disordered regions span residues K438–K460 and D476–R502. Residues P488–S497 show a composition bias toward polar residues. Phosphothreonine is present on residues T516 and T578. A phosphoserine mark is found at S638 and S639. The disordered stretch occupies residues S638–N660. The span at V644 to N660 shows a compositional bias: basic and acidic residues. T688 is subject to Phosphothreonine. K707 participates in a covalent cross-link: Glycyl lysine isopeptide (Lys-Gly) (interchain with G-Cter in SUMO2). S726 carries the phosphoserine modification. Residues T741–G796 enclose the SANT domain. K765 is covalently cross-linked (Glycyl lysine isopeptide (Lys-Gly) (interchain with G-Cter in SUMO2)). The tract at residues C784 to K821 is disordered. Positions S797 to A807 are enriched in basic residues. Residues N812–K821 are compositionally biased toward basic and acidic residues. Glycyl lysine isopeptide (Lys-Gly) (interchain with G-Cter in SUMO2) cross-links involve residues K821, K828, and K847. Residue S872 is modified to Phosphoserine. K948 participates in a covalent cross-link: Glycyl lysine isopeptide (Lys-Gly) (interchain with G-Cter in SUMO2). 2 positions are modified to phosphoserine: S955 and S985. A disordered region spans residues S976 to D998. Positions D981–K990 are enriched in acidic residues.

Interacts with SP1. Interacts with MIS18A. Identified in a complex containing MIS18A, OIP5/MIS18B, MIS18BP1, RBBP7 and RBBP4. Interacts with KAT7/HBO1. Interacts (via N-terminus) with FLNA (via N-terminus).

The protein localises to the nucleus. Its subcellular location is the chromosome. The protein resides in the centromere. Functionally, required for recruitment of CENPA to centromeres and normal chromosome segregation during mitosis. The chain is Mis18-binding protein 1 (Mis18bp1) from Mus musculus (Mouse).